Here is a 776-residue protein sequence, read N- to C-terminus: General transcription and DNA repair factor IIH helicase subunit XPD (776 aa).

Residues 7-277 (DLLVYFPYSY…KKVDEKRLKD (271 aa)) form the Helicase ATP-binding domain. 42-49 (MPSGTGKT) lines the ATP pocket. [4Fe-4S] cluster is bound by residues cysteine 115, cysteine 133, cysteine 150, and cysteine 184. Residues 228-231 (DEAH) carry the DEAH box motif. The tract at residues 736-776 (HVEKQSTSKPPQQQNSAINSTITTSTTTTTTTSTISETHLT) is disordered. The segment covering 742-754 (TSKPPQQQNSAIN) has biased composition (polar residues). The span at 755 to 776 (STITTSTTTTTTTSTISETHLT) shows a compositional bias: low complexity.

This sequence belongs to the helicase family. RAD3/XPD subfamily. Component of the 7-subunit TFIIH core complex composed of XPB/repB, XPD/repD, gtf2h1, gtf2h2, gtf2h3, gtf2h4 and gtf2h5, which is active in NER. The core complex associates with the 3-subunit CDK-activating kinase (CAK) module composed of cycH/cyclin H, cdk7 and mnat1 to form the 10-subunit holoenzyme (holo-TFIIH) active in transcription. It depends on Mg(2+) as a cofactor. Requires [4Fe-4S] cluster as cofactor.

Its subcellular location is the nucleus. The enzyme catalyses Couples ATP hydrolysis with the unwinding of duplex DNA at the replication fork by translocating in the 5'-3' direction. This creates two antiparallel DNA single strands (ssDNA). The leading ssDNA polymer is the template for DNA polymerase III holoenzyme which synthesizes a continuous strand.. The catalysed reaction is ATP + H2O = ADP + phosphate + H(+). In terms of biological role, ATP-dependent 5'-3' DNA helicase, component of the general transcription and DNA repair factor IIH (TFIIH) core complex, which is involved in general and transcription-coupled nucleotide excision repair (NER) of damaged DNA and, when complexed to CDK-activating kinase (CAK), in transcription by RNA polymerase II. In NER, TFIIH acts by opening DNA around the lesion to allow the excision of the damaged oligonucleotide and its replacement by a new DNA fragment. The ATP-dependent helicase activity of XPD/repD is required for DNA opening. In transcription, TFIIH has an essential role in transcription initiation. When the pre-initiation complex (PIC) has been established, TFIIH is required for promoter opening and promoter escape. Phosphorylation of the C-terminal tail (CTD) of the largest subunit of RNA polymerase II by the kinase module CAK controls the initiation of transcription. XPD/repD acts by forming a bridge between CAK and the core-TFIIH complex. This chain is General transcription and DNA repair factor IIH helicase subunit XPD, found in Dictyostelium discoideum (Social amoeba).